The following is a 283-amino-acid chain: NAD kinase (283 aa).

The Proton acceptor role is filled by aspartate 66. NAD(+) contacts are provided by residues 66–67 (DG), 140–141 (ND), arginine 151, arginine 168, aspartate 170, and glutamine 240.

This sequence belongs to the NAD kinase family. A divalent metal cation serves as cofactor.

It is found in the cytoplasm. It catalyses the reaction NAD(+) + ATP = ADP + NADP(+) + H(+). In terms of biological role, involved in the regulation of the intracellular balance of NAD and NADP, and is a key enzyme in the biosynthesis of NADP. Catalyzes specifically the phosphorylation on 2'-hydroxyl of the adenosine moiety of NAD to yield NADP. This Syntrophobacter fumaroxidans (strain DSM 10017 / MPOB) protein is NAD kinase.